Here is a 65-residue protein sequence, read N- to C-terminus: MQKIKTNRSAAKRFKRTKSGKFVYSKSHGSHILTKKNRKRKRSLRKSHILDSSNNKELKRLLPGM.

Positions 1 to 65 (MQKIKTNRSA…KELKRLLPGM (65 aa)) are disordered. Basic residues-rich tracts occupy residues 10-19 (AAKRFKRTKS) and 33-47 (LTKKNRKRKRSLRKS). A compositionally biased stretch (basic and acidic residues) spans 54–65 (NNKELKRLLPGM).

The protein belongs to the bacterial ribosomal protein bL35 family.

The protein is Large ribosomal subunit protein bL35 of Desulfosudis oleivorans (strain DSM 6200 / JCM 39069 / Hxd3) (Desulfococcus oleovorans).